Consider the following 327-residue polypeptide: Fumigatonoid B endoperoxide isomerase nvfE (327 aa).

The interval 1–22 is disordered; the sequence is MGRDQVSHKRSQNSNVSEIPDL. Fe cation is bound by residues His-152, Asp-154, and His-234.

This sequence belongs to the PhyH family. Homodimer. Fe cation serves as cofactor.

It carries out the reaction fumigatonoid B = fumigatonoid C. The protein operates within secondary metabolite biosynthesis; terpenoid biosynthesis. Fumigatonoid B endoperoxide isomerase; part of the gene cluster that mediates the biosynthesis of novofumigatonin, a heavily oxygenated meroterpenoid containing a unique orthoester moiety. The first step of the pathway is the synthesis of 3,5-dimethylorsellinic acid (DMOA) by the polyketide synthase nvfA via condensation of one acetyl-CoA starter unit with 3 malonyl-CoA units and 2 methylations. DMOA is then converted to farnesyl-DMOA by the farnesyltransferase nvfB. Epoxydation by FAD-dependent monooxygenase nvfK, followed by a protonation-initiated cyclization catalyzed by the terpene cyclase nvfL leads to the production of asnavolin H. The short chain dehydrogenase nvfC then as a 3-OH dehydrogenase of asnovolin H to yield chemesin D. There are two branches to synthesize asnovolin A from chemesin D. In one branch, chemesin D undergoes Baeyer-Villiger oxidation by nvfH, methylation by nvfJ, and enoyl reduction by the nvfM D enoylreductase that reduces the double bond between C-5'and C-6', to form respectively asnovolin I, asnovolin K, and asnovolin A. In the other branch, the methylation precedes the Baeyer-Villiger oxidation and the enoyl reduction to yield asnovolin A via the asnovolin J intermediate. Asnovolin A is further converted to fumigatonoid A by the Fe(II)/2-oxoglutarate-dependent dioxygenase nvfI that catalyzes an endoperoxidation reaction. The alpha/beta hydrolase nvfD then acts as an epimerase that converts fumigatonoid A to its C-5' epimer, which then undergoes spontaneous or nvfD-catalyzed lactonization. The following step utilizes the ketoreductase nvfG to produce fumigatonoid B. The dioxygenase nvfE further converts fumigatonoid B into fumigatonoid C. Finally the Fe(II)/2-oxoglutarate-dependent dioxygenase nvfF catalyzes two rounds of oxidation to transform fumigatonoid C into the end product, novofumigatonin A. The protein is Fumigatonoid B endoperoxide isomerase nvfE of Aspergillus novofumigatus (strain IBT 16806).